The sequence spans 354 residues: Cyclin-D1-2 (354 aa).

Disordered stretches follow at residues 37–74 (FFQQLQGPAPAVSSSPSTTTATAPAAAGSCDDGGEEEE) and 331–354 (TTATTAVSSEEVVSSSPPSKRRKM). Low complexity-rich tracts occupy residues 44-66 (PAPAVSSSPSTTTATAPAAAGSC) and 331-346 (TTATTAVSSEEVVSSS).

Belongs to the cyclin family. Cyclin D subfamily.

The protein is Cyclin-D1-2 (CYCD1-2) of Oryza sativa subsp. japonica (Rice).